The primary structure comprises 285 residues: Sulfotransferase 2A6 (285 aa).

A 3'-phosphoadenylyl sulfate-binding site is contributed by 44–49 (KSGTNW). Histidine 99 functions as the Proton acceptor in the catalytic mechanism. 3'-phosphoadenylyl sulfate-binding positions include arginine 121, serine 129, tyrosine 184, 218–223 (SSFQAM), and 247–249 (RKG).

The protein belongs to the sulfotransferase 1 family. As to quaternary structure, oligomer.

The protein resides in the cytoplasm. Its subcellular location is the cytosol. The catalysed reaction is an alcohol + 3'-phosphoadenylyl sulfate = an alkyl sulfate + adenosine 3',5'-bisphosphate + H(+). It catalyses the reaction glycolithocholate + 3'-phosphoadenylyl sulfate = sulfoglycolithocholate + adenosine 3',5'-bisphosphate + H(+). It carries out the reaction taurolithocholate + 3'-phosphoadenylyl sulfate = taurolithocholate 3-sulfate + adenosine 3',5'-bisphosphate + H(+). The enzyme catalyses 3beta-hydroxyandrost-5-en-17-one + 3'-phosphoadenylyl sulfate = dehydroepiandrosterone 3-sulfate + adenosine 3',5'-bisphosphate + H(+). Its function is as follows. Sulfotransferase that utilizes 3'-phospho-5'-adenylyl sulfate (PAPS) as sulfonate donor to catalyze the sulfonation of the hydroxyl group of hydroxysteroids and bile acids. The protein is Sulfotransferase 2A6 of Mus musculus (Mouse).